The primary structure comprises 313 residues: Beta-ketoacyl-[acyl-carrier-protein] synthase III (313 aa).

Catalysis depends on residues cysteine 112 and histidine 238. The interval 239 to 243 is ACP-binding; that stretch reads QANIR. Residue asparagine 268 is part of the active site.

It belongs to the thiolase-like superfamily. FabH family. As to quaternary structure, homodimer.

Its subcellular location is the cytoplasm. It catalyses the reaction malonyl-[ACP] + acetyl-CoA + H(+) = 3-oxobutanoyl-[ACP] + CO2 + CoA. The protein operates within lipid metabolism; fatty acid biosynthesis. In terms of biological role, catalyzes the condensation reaction of fatty acid synthesis by the addition to an acyl acceptor of two carbons from malonyl-ACP. Catalyzes the first condensation reaction which initiates fatty acid synthesis and may therefore play a role in governing the total rate of fatty acid production. Possesses both acetoacetyl-ACP synthase and acetyl transacylase activities. Its substrate specificity determines the biosynthesis of branched-chain and/or straight-chain of fatty acids. The sequence is that of Beta-ketoacyl-[acyl-carrier-protein] synthase III from Staphylococcus epidermidis (strain ATCC 35984 / DSM 28319 / BCRC 17069 / CCUG 31568 / BM 3577 / RP62A).